Reading from the N-terminus, the 266-residue chain is Elongation factor Ts (266 aa).

The segment at 80 to 83 is involved in Mg(2+) ion dislocation from EF-Tu; sequence TDFV.

It belongs to the EF-Ts family.

The protein localises to the cytoplasm. In terms of biological role, associates with the EF-Tu.GDP complex and induces the exchange of GDP to GTP. It remains bound to the aminoacyl-tRNA.EF-Tu.GTP complex up to the GTP hydrolysis stage on the ribosome. This is Elongation factor Ts from Buchnera aphidicola subsp. Baizongia pistaciae (strain Bp).